We begin with the raw amino-acid sequence, 293 residues long: Nitrogenase iron protein (293 aa).

10–17 (GKGGIGKS) provides a ligand contact to ATP. Residue Cys-98 coordinates [4Fe-4S] cluster. Arg-101 is subject to ADP-ribosylarginine; by dinitrogenase reductase ADP-ribosyltransferase. Cys-133 is a binding site for [4Fe-4S] cluster.

It belongs to the NifH/BchL/ChlL family. In terms of assembly, homodimer. The cofactor is [4Fe-4S] cluster. The reversible ADP-ribosylation of Arg-101 inactivates the nitrogenase reductase and regulates nitrogenase activity.

It catalyses the reaction N2 + 8 reduced [2Fe-2S]-[ferredoxin] + 16 ATP + 16 H2O = H2 + 8 oxidized [2Fe-2S]-[ferredoxin] + 2 NH4(+) + 16 ADP + 16 phosphate + 6 H(+). Its function is as follows. The key enzymatic reactions in nitrogen fixation are catalyzed by the nitrogenase complex, which has 2 components: the iron protein and the molybdenum-iron protein. This Klebsiella pneumoniae (strain 342) protein is Nitrogenase iron protein.